The primary structure comprises 1302 residues: RNA-directed RNA polymerase (1302 aa).

The RdRp catalytic domain occupies 562-823 (VIVGDLEATG…QTHAKQGCYV (262 aa)).

The protein belongs to the reoviridae RNA-directed RNA polymerase family.

The catalysed reaction is RNA(n) + a ribonucleoside 5'-triphosphate = RNA(n+1) + diphosphate. In Antilocapra americana (Pronghorn), this protein is RNA-directed RNA polymerase (Segment-1).